The chain runs to 107 residues: Heme-degrading monooxygenase (107 aa).

The 93-residue stretch at 2 to 94 folds into the ABM domain; that stretch reads IIVTNTAKIT…YILDNKIAYY (93 aa). Asn-6 serves as a coordination point for Fe cation. His-76 is a heme binding site.

This sequence belongs to the antibiotic biosynthesis monooxygenase family. Heme-degrading monooxygenase IsdG subfamily. In terms of assembly, homodimer.

It is found in the cytoplasm. The catalysed reaction is heme b + 3 reduced [NADPH--hemoprotein reductase] + 3 O2 = biliverdin IXalpha + CO + Fe(2+) + 3 oxidized [NADPH--hemoprotein reductase] + 3 H2O + H(+). Its function is as follows. Allows bacterial pathogens to use the host heme as an iron source. Catalyzes the oxidative degradation of the heme macrocyclic porphyrin ring to the biliverdin in the presence of a suitable electron donor such as ascorbate or NADPH--cytochrome P450 reductase, with subsequent release of free iron. The protein is Heme-degrading monooxygenase of Bacillus cereus (strain ATCC 14579 / DSM 31 / CCUG 7414 / JCM 2152 / NBRC 15305 / NCIMB 9373 / NCTC 2599 / NRRL B-3711).